Reading from the N-terminus, the 192-residue chain is Lipid A acyltransferase PagP (192 aa).

The first 24 residues, 1-24, serve as a signal peptide directing secretion; sequence MWLRFCAPALMAWYWVFFPSTSQA. Residues H63, D106, and S107 contribute to the active site.

The protein belongs to the lipid A palmitoyltransferase family. In terms of assembly, homodimer.

The protein localises to the cell outer membrane. The catalysed reaction is a lipid A + a 1,2-diacyl-sn-glycero-3-phosphocholine = a hepta-acyl lipid A + a 2-acyl-sn-glycero-3-phosphocholine. The enzyme catalyses a lipid IVA + a 1,2-diacyl-sn-glycero-3-phosphocholine = a lipid IVB + a 2-acyl-sn-glycero-3-phosphocholine. It catalyses the reaction a lipid IIA + a 1,2-diacyl-sn-glycero-3-phosphocholine = a lipid IIB + a 2-acyl-sn-glycero-3-phosphocholine. In terms of biological role, transfers a fatty acid residue from the sn-1 position of a phospholipid to the N-linked hydroxyfatty acid chain on the proximal unit of lipid A or its precursors. This is Lipid A acyltransferase PagP from Musicola paradisiaca (strain Ech703) (Dickeya paradisiaca).